The chain runs to 109 residues: MQQFEWIHAAWLAIAIVLEIIANVFLKFSDGFRRKIYGILSLAAVLGAFSALSQAVKGIDLSVAYALWGGFGIAATIAAGWVLFGQRLNNKGWAGVILLVAGMVLIKLA.

A run of 4 helical transmembrane segments spans residues 6–26, 36–56, 64–84, and 88–108; these read WIHAAWLAIAIVLEIIANVFL, IYGILSLAAVLGAFSALSQAV, AYALWGGFGIAATIAAGWVLF, and LNNKGWAGVILLVAGMVLIKL.

Belongs to the drug/metabolite transporter (DMT) superfamily. Small multidrug resistance (SMR) (TC 2.A.7.1) family. MdtI subfamily. Forms a complex with MdtJ.

Its subcellular location is the cell inner membrane. Its function is as follows. Catalyzes the excretion of spermidine. The polypeptide is Spermidine export protein MdtI (Klebsiella pneumoniae subsp. pneumoniae (strain ATCC 700721 / MGH 78578)).